The sequence spans 65 residues: Large ribosomal subunit protein bL35 (65 aa).

The protein belongs to the bacterial ribosomal protein bL35 family.

The chain is Large ribosomal subunit protein bL35 from Erwinia tasmaniensis (strain DSM 17950 / CFBP 7177 / CIP 109463 / NCPPB 4357 / Et1/99).